A 2174-amino-acid chain; its full sequence is Spectinabilin polyketide synthase system protein NorB (2174 aa).

Residues 34–459 (REPVAVVAMG…GTNAHVILEQ (426 aa)) form the Ketosynthase family 3 (KS3) domain. Catalysis depends on for beta-ketoacyl synthase activity residues cysteine 206, histidine 341, and histidine 381. Residues 567-888 (FLFSGQGSQR…AAVSRAFVQG (322 aa)) enclose the Malonyl-CoA:ACP transacylase (MAT) domain. The N-terminal hotdog fold stretch occupies residues 938–1060 (HPLLGACLEL…GQLAPEAAAP (123 aa)). In terms of domain architecture, PKS/mFAS DH spans 938–1212 (HPLLGACLEL…TRPITAGQLR (275 aa)). Catalysis depends on histidine 970, which acts as the Proton acceptor; for dehydratase activity. The disordered stretch occupies residues 1056-1075 (EAAAPPAAPGEDWPPPGAEP). Pro residues predominate over residues 1061-1074 (PAAPGEDWPPPGAE). Residues 1073-1212 (AEPVPLEGFY…TRPITAGQLR (140 aa)) form a C-terminal hotdog fold region. Aspartate 1134 serves as the catalytic Proton donor; for dehydratase activity. The Enoyl reductase (ER) domain maps to 1424 to 1726 (GTVDDLVLAP…QARNVGKLVL (303 aa)). The Ketoreductase (KR) domain maps to 1736-1915 (GTILVTGGYG…ATALAWGMWA (180 aa)). The 76-residue stretch at 2017-2092 (PAVRELVRGQ…ALTDAIEARL (76 aa)) folds into the Carrier domain. O-(pantetheine 4'-phosphoryl)serine is present on serine 2052.

In terms of assembly, the spectinabilin polyketide synthase complex is composed of 4 proteins, NorA, NorA', NorB and NorC. The complex comprises 6 modules with a total of 28 catalytic domains catalyzing 7 chain elongations. NorA comprises one module, NorA' two modules, NorB one module and NorC two modules. Requires pantetheine 4'-phosphate as cofactor.

It catalyses the reaction 4-nitrobenzoyl-CoA + 6 (S)-methylmalonyl-CoA + malonyl-CoA + 6 NADPH + 12 H(+) = demethyldeoxyspectinabilin + 7 CO2 + 6 NADP(+) + 8 CoA + 5 H2O. It functions in the pathway antibiotic biosynthesis. The protein operates within polyketide biosynthesis. Component of a type I modular polyketide synthase (PKS) that generates the backbone of the antibiotic spectinabilin (also known as neoaureothin), a nitroaryl-substituted polyketide metabolite. This PKS system accepts the unusual starter unit 4-nitrobenzoyl-CoA and extends it by 6 molecules of (S)-methylmalonyl-CoA and a single molecule of malonyl-CoA. The chain is Spectinabilin polyketide synthase system protein NorB from Streptomyces orinoci (Streptoverticillium orinoci).